The chain runs to 298 residues: Lipoyl synthase (298 aa).

Residues Cys-40, Cys-45, Cys-51, Cys-67, Cys-71, Cys-74, and Ser-280 each coordinate [4Fe-4S] cluster. Positions 53–269 (AVRKTATFMI…KEIALSKGFS (217 aa)) constitute a Radical SAM core domain.

Belongs to the radical SAM superfamily. Lipoyl synthase family. The cofactor is [4Fe-4S] cluster.

The protein resides in the cytoplasm. The enzyme catalyses [[Fe-S] cluster scaffold protein carrying a second [4Fe-4S](2+) cluster] + N(6)-octanoyl-L-lysyl-[protein] + 2 oxidized [2Fe-2S]-[ferredoxin] + 2 S-adenosyl-L-methionine + 4 H(+) = [[Fe-S] cluster scaffold protein] + N(6)-[(R)-dihydrolipoyl]-L-lysyl-[protein] + 4 Fe(3+) + 2 hydrogen sulfide + 2 5'-deoxyadenosine + 2 L-methionine + 2 reduced [2Fe-2S]-[ferredoxin]. Its pathway is protein modification; protein lipoylation via endogenous pathway; protein N(6)-(lipoyl)lysine from octanoyl-[acyl-carrier-protein]. Catalyzes the radical-mediated insertion of two sulfur atoms into the C-6 and C-8 positions of the octanoyl moiety bound to the lipoyl domains of lipoate-dependent enzymes, thereby converting the octanoylated domains into lipoylated derivatives. The sequence is that of Lipoyl synthase from Bacillus mycoides (strain KBAB4) (Bacillus weihenstephanensis).